Consider the following 548-residue polypeptide: Eukaryotic translation initiation factor 3 subunit D (548 aa).

Residue Lys53 is modified to N6-acetyllysine. Ser161 carries the post-translational modification Phosphoserine. The RNA gate stretch occupies residues 285–299 (DFDLLTVSETANEPP). The interval 523–548 (PDGTFSSDEDEEEEEEEEEEEEEEET) is disordered. Phosphoserine occurs at positions 528 and 529. Positions 529-548 (SDEDEEEEEEEEEEEEEEET) are enriched in acidic residues.

Belongs to the eIF-3 subunit D family. Component of the eukaryotic translation initiation factor 3 (eIF-3) complex, which is composed of 13 subunits: EIF3A, EIF3B, EIF3C, EIF3D, EIF3E, EIF3F, EIF3G, EIF3H, EIF3I, EIF3J, EIF3K, EIF3L and EIF3M. The eIF-3 complex appears to include 3 stable modules: module A is composed of EIF3A, EIF3B, EIF3G and EIF3I; module B is composed of EIF3F, EIF3H, and EIF3M; and module C is composed of EIF3C, EIF3D, EIF3E, EIF3K and EIF3L. EIF3C of module C binds EIF3B of module A and EIF3H of module B, thereby linking the three modules. EIF3J is a labile subunit that binds to the eIF-3 complex via EIF3B. The eIF-3 complex interacts with RPS6KB1 under conditions of nutrient depletion. Mitogenic stimulation leads to binding and activation of a complex composed of MTOR and RPTOR, leading to phosphorylation and release of RPS6KB1 and binding of EIF4B to eIF-3.

The protein localises to the cytoplasm. Its function is as follows. mRNA cap-binding component of the eukaryotic translation initiation factor 3 (eIF-3) complex, a complex required for several steps in the initiation of protein synthesis of a specialized repertoire of mRNAs. The eIF-3 complex associates with the 40S ribosome and facilitates the recruitment of eIF-1, eIF-1A, eIF-2:GTP:methionyl-tRNAi and eIF-5 to form the 43S pre-initiation complex (43S PIC). The eIF-3 complex stimulates mRNA recruitment to the 43S PIC and scanning of the mRNA for AUG recognition. The eIF-3 complex is also required for disassembly and recycling of post-termination ribosomal complexes and subsequently prevents premature joining of the 40S and 60S ribosomal subunits prior to initiation. The eIF-3 complex specifically targets and initiates translation of a subset of mRNAs involved in cell proliferation, including cell cycling, differentiation and apoptosis, and uses different modes of RNA stem-loop binding to exert either translational activation or repression. In the eIF-3 complex, EIF3D specifically recognizes and binds the 7-methylguanosine cap of a subset of mRNAs. This is Eukaryotic translation initiation factor 3 subunit D from Macaca fascicularis (Crab-eating macaque).